A 600-amino-acid polypeptide reads, in one-letter code: CTP synthase (600 aa).

Positions 304–570 (TIVLVGKYTH…IQSGEEVEWS (267 aa)) constitute a Glutamine amidotransferase type-1 domain. Catalysis depends on for GATase activity residues cysteine 403, histidine 532, and glutamate 534.

The protein belongs to the CTP synthase family.

It carries out the reaction UTP + L-glutamine + ATP + H2O = CTP + L-glutamate + ADP + phosphate + 2 H(+). It participates in pyrimidine metabolism; CTP biosynthesis via de novo pathway; CTP from UDP: step 2/2. Catalyzes the ATP-dependent amination of UTP to CTP with either L-glutamine or ammonia as the source of nitrogen. The protein is CTP synthase (ura7) of Schizosaccharomyces pombe (strain 972 / ATCC 24843) (Fission yeast).